The following is a 124-amino-acid chain: Glycine cleavage system H protein (124 aa).

A Lipoyl-binding domain is found at 19 to 101 (TGTVGITDYA…AGKGWFLQIK (83 aa)). Lysine 60 is modified (N6-lipoyllysine).

This sequence belongs to the GcvH family. As to quaternary structure, the glycine cleavage system is composed of four proteins: P, T, L and H. It depends on (R)-lipoate as a cofactor.

Its function is as follows. The glycine cleavage system catalyzes the degradation of glycine. The H protein shuttles the methylamine group of glycine from the P protein to the T protein. The chain is Glycine cleavage system H protein from Beijerinckia indica subsp. indica (strain ATCC 9039 / DSM 1715 / NCIMB 8712).